Consider the following 817-residue polypeptide: MTIKIRFPKDVREYARKEKVKESIIKLTETSLAEAITNFHRRMIILQGDTLEKAKLAGILAGGVARILSEYIPEFLDRKLRDEDKIEVLYATDALGEDTYGRKRFEEFRKHFSVLAPNAELTSVTFKYSRDILGRTFDILVLDLSYDYSPNDLGRIIETVRGGGLIFILTNPFEKWKDMWTGFHKSLVTPPYTIDDVKKRFNRRLIRKFTEHKGIYIVDADKKKIERRPRKNKSQAKLPEREKVEIPRDIKFPRELYELCLTRGQVEVLKALEDLIENPGMVVLTADRGRGKSVSVGIASIGLAITSKKKNFRIVVTAPELENVQSLLKFAERSLKVLGYKTKTVKESGLIKEVYAKGIGIRYYPPTKGYRQKADLYIVDEAAGIHVPILHRYLEKERVVFSSTIHGYEGAGRGFSVKFLKKAKEKREYKEIHLSVPIRYAEGDPIERWLFDVLLLDAEPVELTEEDYELIRKMEVYLEEPDLDDWFENDREDLRHFVGIYVLAHYRNRPSDVALLADAPHHEARVLRLKNGKIVTAIQIAKEGGIPKAVIDKMAKGYKPPGNIIPDMMVKHHYAKEFAKLRGYRIVRIATHPDAMDLGLGSKALELLVKEAQEKGLDWVGSGFGASEELIRFWVRNGFAVVHLSPTRNPVSGEYTAIVIKPISERAKEIVKKANDEFRLRLTEWLGDTHRDLEPEIARWLFETPFGEAVNYPIHLTKVQRKRLEMFIKRVLTYDTVVDAVKPLVKLYFLDGWMRPYLDDRQIALLIHRVLQAHDWKETAKLLNRTELYTMIELRDIVRGLWYYYKHMLKDEEKDIS.

Residues Q265, G289 to I298, and R439 contribute to the ATP site. One can recognise an N-acetyltransferase domain in the interval E469–S664. Residues I589–T591, M596–S602, E629, and R636 each bind acetyl-CoA.

Belongs to the RNA cytidine acetyltransferase family. TmcA subfamily.

The protein localises to the cytoplasm. It carries out the reaction cytidine(34) in elongator tRNA(Met) + acetyl-CoA + ATP + H2O = N(4)-acetylcytidine(34) in elongator tRNA(Met) + ADP + phosphate + CoA + H(+). It catalyses the reaction a cytidine in RNA + acetyl-CoA + ATP + H2O = an N(4)-acetylcytidine in RNA + ADP + phosphate + CoA + H(+). The enzyme catalyses a cytidine in tRNA + acetyl-CoA + ATP + H2O = an N(4)-acetylcytidine in tRNA + ADP + phosphate + CoA + H(+). The catalysed reaction is a cytidine in mRNA + acetyl-CoA + ATP + H2O = an N(4)-acetylcytidine in mRNA + ADP + phosphate + CoA + H(+). Its function is as follows. Catalyzes the formation of N(4)-acetylcytidine (ac(4)C) at the wobble position of tRNA(Met), by using acetyl-CoA as an acetyl donor and ATP (or GTP). Functionally, catalyzes the formation of N(4)-acetylcytidine (ac(4)C) sites in rRNA, tRNA, mRNA and non-coding (nc) RNA, almost always on the middle C of a CCG motif. In hyperthermophiles more acetylation is seen at higher temperatures. The chain is tRNA(Met) cytidine acetyltransferase TmcA from Pyrococcus abyssi (strain GE5 / Orsay).